The following is a 317-amino-acid chain: Ceramide reductase (317 aa).

Residues 1 to 27 form the signal peptide; that stretch reads MATDARGVVAITGATGFLGRHLVRALA.

The protein belongs to the NAD(P)-dependent epimerase/dehydratase family.

It localises to the periplasm. The catalysed reaction is N-acyl-3-oxosphinganine + NADH + H(+) = an N-acylsphinganine + NAD(+). The protein operates within lipid metabolism; sphingolipid metabolism. Its function is as follows. Involved in de novo bacterial ceramide synthesis. Catalyzes the reduction of bacterial oxidized ceramides to bacterial dihydroceramides. This Caulobacter vibrioides (strain NA1000 / CB15N) (Caulobacter crescentus) protein is Ceramide reductase.